The following is a 146-amino-acid chain: Small ribosomal subunit protein eS19 (146 aa).

The protein belongs to the eukaryotic ribosomal protein eS19 family.

The chain is Small ribosomal subunit protein eS19 (RPS19A) from Oryza sativa subsp. japonica (Rice).